The following is an 83-amino-acid chain: Hainantoxin-III 12 (83 aa).

An N-terminal signal peptide occupies residues 1–21 (MKASMFLALAGLVLLFVVGYA). Positions 22–48 (SGSEEKEFPRELLSKIFAVDDFKGEER) are excised as a propeptide. Cystine bridges form between cysteine 50–cysteine 65, cysteine 57–cysteine 70, and cysteine 64–cysteine 77. Residue leucine 81 is modified to Leucine amide.

The protein belongs to the neurotoxin 10 (Hwtx-1) family. 15 (Hntx-3) subfamily. In terms of assembly, monomer. In terms of tissue distribution, expressed by the venom gland.

It is found in the secreted. Its function is as follows. Selective antagonist of neuronal tetrodotoxin (TTX)-sensitive voltage-gated sodium channels (IC(50)=1270 nM on Nav1.1/SCN1A, 270 nM on Nav1.2/SCN2A, 491 nM on Nav1.3/SCN3A and 232 nM on Nav1.7/SCN9A). This toxin suppress Nav1.7 current amplitude without significantly altering the activation, inactivation, and repriming kinetics. Short extreme depolarizations partially activate the toxin-bound channel, indicating voltage-dependent inhibition of this toxin. This toxin increases the deactivation of the Nav1.7 current after extreme depolarizations. The toxin-Nav1.7 complex is gradually dissociated upon prolonged strong depolarizations in a voltage-dependent manner, and the unbound toxin rebinds to Nav1.7 after a long repolarization. Moreover, analysis of chimeric channels showed that the DIIS3-S4 linker is critical for toxin binding to Nav1.7. These data are consistent with this toxin interacting with Nav1.7 site 4 and trapping the domain II voltage sensor in the closed state. The protein is Hainantoxin-III 12 of Cyriopagopus hainanus (Chinese bird spider).